Reading from the N-terminus, the 344-residue chain is Cell adhesion molecule CEACAM6 (344 aa).

A signal peptide spans 1–34 (MGPPSAPPCRLHVPWKEVLLTASLLTFWNPPTTA). The Ig-like V-type domain occupies 35–142 (KLTIESTPFN…EATGQFHVYP (108 aa)). Asn104, Asn111, Asn115, Asn152, Asn173, Asn197, Asn224, Asn256, Asn274, Asn288, Asn292, and Asn309 each carry an N-linked (GlcNAc...) asparagine glycan. Ig-like C2-type domains follow at residues 145-232 (PKPS…VTLN) and 240-314 (PTIS…TTVT). Residues Cys167 and Cys215 are joined by a disulfide bond. Cys259 and Cys299 form a disulfide bridge. Gly320 carries the GPI-anchor amidated glycine lipid modification. A propeptide spans 321–344 (SAPVLSAVATVGITIGVLARVALI) (removed in mature form).

It belongs to the immunoglobulin superfamily. CEA family. Homodimer; homodimerizes via its Ig-like V-type domain. Heterodimer with CEACAM8; heterodimerizes via its Ig-like V-type domain. Post-translationally, glycosylated. As to expression, expressed in neutrophils. Expressed in columnar epithelial and goblet cells of the colon. Expressed in numerous tumor cell lines (at protein level).

The protein localises to the cell membrane. The protein resides in the apical cell membrane. It is found in the cell surface. Its function is as follows. Cell surface glycoprotein that plays a role in cell adhesion and tumor progression. Intercellular adhesion occurs in a calcium- and fibronectin-independent manner. Mediates homophilic and heterophilic cell adhesion with other carcinoembryonic antigen-related cell adhesion molecules, such as CEACAM5 and CEACAM8. Heterophilic interaction with CEACAM8 occurs in activated neutrophils. Plays a role in neutrophil adhesion to cytokine-activated endothelial cells. Plays a role in cell migration and cell adhesion to endothelial cells. The chain is Cell adhesion molecule CEACAM6 from Homo sapiens (Human).